The primary structure comprises 394 residues: NAD(P)H-quinone oxidoreductase subunit H (394 aa).

The protein belongs to the complex I 49 kDa subunit family. As to quaternary structure, NDH-1 can be composed of about 15 different subunits; different subcomplexes with different compositions have been identified which probably have different functions.

It is found in the cellular thylakoid membrane. It carries out the reaction a plastoquinone + NADH + (n+1) H(+)(in) = a plastoquinol + NAD(+) + n H(+)(out). The enzyme catalyses a plastoquinone + NADPH + (n+1) H(+)(in) = a plastoquinol + NADP(+) + n H(+)(out). Functionally, NDH-1 shuttles electrons from an unknown electron donor, via FMN and iron-sulfur (Fe-S) centers, to quinones in the respiratory and/or the photosynthetic chain. The immediate electron acceptor for the enzyme in this species is believed to be plastoquinone. Couples the redox reaction to proton translocation, and thus conserves the redox energy in a proton gradient. Cyanobacterial NDH-1 also plays a role in inorganic carbon-concentration. This chain is NAD(P)H-quinone oxidoreductase subunit H, found in Synechococcus sp. (strain CC9605).